The chain runs to 491 residues: UDP-glycosyltransferase 73C1 (491 aa).

Residues S292, 352–354 (SPQ), 369–377 (HCGWNSTLE), and 391–394 (FGDQ) contribute to the UDP-alpha-D-glucose site.

Belongs to the UDP-glycosyltransferase family.

Functionally, involved in the O-glucosylation of trans-zeatin and dihydrozeatin. Also active in vitro on cis-zeatin, dihydrozeatin-9-N-Glc, and olomoucine. Can detoxify the explosive 2,4,6-trinitrotoluene in plant by forming O- or C-glucose conjugates. This is UDP-glycosyltransferase 73C1 (UGT73C1) from Arabidopsis thaliana (Mouse-ear cress).